A 20-amino-acid polypeptide reads, in one-letter code: Small ribosomal subunit protein bS20 (20 aa).

The interval 1–20 is disordered; it reads ANNPGARKAIRKIEARTEVN. Basic and acidic residues predominate over residues 11–20; sequence RKIEARTEVN.

Belongs to the bacterial ribosomal protein bS20 family.

Functionally, binds directly to 16S ribosomal RNA. The sequence is that of Small ribosomal subunit protein bS20 (rpsT) from Brevundimonas vesicularis (Pseudomonas vesicularis).